The chain runs to 129 residues: Large ribosomal subunit protein bL17 (129 aa).

This sequence belongs to the bacterial ribosomal protein bL17 family. As to quaternary structure, part of the 50S ribosomal subunit. Contacts protein L32.

This Stutzerimonas stutzeri (strain A1501) (Pseudomonas stutzeri) protein is Large ribosomal subunit protein bL17.